The sequence spans 332 residues: Flotillin-like protein FloA (332 aa).

The chain crosses the membrane as a helical span at residues 9–29 (FILIGGGIIFVVLFFHYVPFF).

This sequence belongs to the flotillin-like FloA family. As to quaternary structure, homooligomerizes.

The protein localises to the cell membrane. It localises to the membrane raft. Functionally, found in functional membrane microdomains (FMM) that may be equivalent to eukaryotic membrane rafts. FMMs are highly dynamic and increase in number as cells age. Flotillins are thought to be important factors in membrane fluidity. The chain is Flotillin-like protein FloA from Phocaeicola vulgatus (strain ATCC 8482 / DSM 1447 / JCM 5826 / CCUG 4940 / NBRC 14291 / NCTC 11154) (Bacteroides vulgatus).